A 305-amino-acid polypeptide reads, in one-letter code: Putative glutamine--fructose-6-phosphate aminotransferase [isomerizing] (305 aa).

Cys2 acts as the Nucleophile; for GATase activity in catalysis. The region spanning 2 to 305 is the Glutamine amidotransferase type-2 domain; the sequence is CGIFGYCNFL…RLCITSAVCE (304 aa).

It catalyses the reaction D-fructose 6-phosphate + L-glutamine = D-glucosamine 6-phosphate + L-glutamate. It functions in the pathway nucleotide-sugar biosynthesis; UDP-N-acetyl-alpha-D-glucosamine biosynthesis; alpha-D-glucosamine 6-phosphate from D-fructose 6-phosphate: step 1/1. Functionally, involved in amino sugar synthesis (formation of chitin, supplies the amino sugars of asparagine-linked oligosaccharides of glycoproteins). The sequence is that of Putative glutamine--fructose-6-phosphate aminotransferase [isomerizing] from Saccharomyces cerevisiae (strain Lalvin EC1118 / Prise de mousse) (Baker's yeast).